Reading from the N-terminus, the 50-residue chain is Omega-conotoxin Bu8 (50 aa).

Residue Ala-1 is a signal peptide. The propeptide occupies 2-24 (EDSRGTQLHRALRKATKLSESTR). Disulfide bonds link Cys-25-Cys-40, Cys-32-Cys-44, and Cys-39-Cys-49. Position 49 is a cysteine amide (Cys-49).

It belongs to the conotoxin O1 superfamily. In terms of tissue distribution, expressed by the venom duct.

The protein localises to the secreted. Functionally, omega-conotoxins act at presynaptic membranes, they bind and block voltage-gated calcium channels (Cav). This toxin selectively and potently inhibits depolarization-activated rat Cav2.2/CACNA1B currents (IC(50)=89 nM), when coexpressed with alpha-2/delta-1 (CACNA2D1) and beta-3 (CACNB3) subunits. In vivo, is lethal to fish and displays potent analgesic activity in mice pain models of hot plate and acetic acid writhing but has fewer side effects on mouse motor function and lower toxicity in goldfish. Shows higher or similar analgesic activity in the pain models mentioned above compared to MVIIA, and lower side effects. In addition, it blocks Cav2.2/CACNA1B more rapidly than MVIIA and also dissociates more rapidly. This chain is Omega-conotoxin Bu8, found in Conus bullatus (Bubble cone).